The primary structure comprises 190 residues: MAKANEIKRGMAISYNGKLLLVRDIDVQSPSARGASTLYKMRFSDVRTGLKVEERFKGDDILDTISLSRRKVNFSYIDGEEYVFMDDEDYTPYIFKKDQIEDELLFIPEAGLPGMQVLTLEGQVLALELPQTVDMEIVDTAPGIKGASASARNKPATMATGLTIQVPEYLSAGDKIRIHIAERRYMSRAD.

It belongs to the elongation factor P family.

This Serratia proteamaculans (strain 568) protein is Elongation factor P-like protein.